The primary structure comprises 859 residues: Paladin (859 aa).

The tract at residues 1–34 (MGTTASTAQQTVSAGTSLEGLQGGSSSSMDSQHS) is disordered. Gly2 is lipidated: N-myristoyl glycine. Ser89 carries the phosphoserine modification.

The protein belongs to the paladin family. As to expression, vascular expression detected in the central nervous system, kidney, lung, heart, skeletal muscle, white adipose tissue (WAT), brown adipose tissue, liver, pancreas and spleen. Not expressed in all vessels: for instance, not expressed in capillaries in the brain, and expressed mainly in large vessels in the heart, WAT, liver, pancreas and kidney. Predominant nonvascular expression in myocardium and lung mesenchyme. In large vessels, primarily expressed by smooth muscle cells, but occasionally detected at low levels in the endothelium. Expressed in various cells of the hematopoietic lineage.

It is found in the cytoplasm. It localises to the cytosol. This is Paladin (Pald1) from Mus musculus (Mouse).